Here is a 303-residue protein sequence, read N- to C-terminus: Diaminopimelate epimerase (303 aa).

Substrate-binding residues include Asn15, Gln47, and Asn67. Cys76 serves as the catalytic Proton donor. Substrate contacts are provided by residues 77 to 78 (GN), Asn163, Asn197, and 215 to 216 (ER). The active-site Proton acceptor is Cys224. Residue 225-226 (GS) participates in substrate binding. Residues 278–303 (FDPATGEWSRDTQGLQGSGNADRGAA) form a disordered region.

It belongs to the diaminopimelate epimerase family. As to quaternary structure, homodimer.

Its subcellular location is the cytoplasm. The catalysed reaction is (2S,6S)-2,6-diaminopimelate = meso-2,6-diaminopimelate. Its pathway is amino-acid biosynthesis; L-lysine biosynthesis via DAP pathway; DL-2,6-diaminopimelate from LL-2,6-diaminopimelate: step 1/1. Functionally, catalyzes the stereoinversion of LL-2,6-diaminopimelate (L,L-DAP) to meso-diaminopimelate (meso-DAP), a precursor of L-lysine and an essential component of the bacterial peptidoglycan. The sequence is that of Diaminopimelate epimerase from Brucella melitensis biotype 1 (strain ATCC 23456 / CCUG 17765 / NCTC 10094 / 16M).